Here is a 39-residue protein sequence, read N- to C-terminus: Photosystem II reaction center protein J (39 aa).

A helical transmembrane segment spans residues 7–27 (IPLWIVATVAGTGVLVVVGLF).

The protein belongs to the PsbJ family. In terms of assembly, PSII is composed of 1 copy each of membrane proteins PsbA, PsbB, PsbC, PsbD, PsbE, PsbF, PsbH, PsbI, PsbJ, PsbK, PsbL, PsbM, PsbT, PsbX, PsbY, PsbZ, Psb30/Ycf12, peripheral proteins PsbO, CyanoQ (PsbQ), PsbU, PsbV and a large number of cofactors. It forms dimeric complexes.

The protein resides in the cellular thylakoid membrane. In terms of biological role, one of the components of the core complex of photosystem II (PSII). PSII is a light-driven water:plastoquinone oxidoreductase that uses light energy to abstract electrons from H(2)O, generating O(2) and a proton gradient subsequently used for ATP formation. It consists of a core antenna complex that captures photons, and an electron transfer chain that converts photonic excitation into a charge separation. The chain is Photosystem II reaction center protein J from Synechococcus elongatus (strain ATCC 33912 / PCC 7942 / FACHB-805) (Anacystis nidulans R2).